We begin with the raw amino-acid sequence, 1261 residues long: MDGPTRGHGLRKKRRSRSQRDRERRSRAGLGTGAAGGIGAGRTRAPSLASSSGSDKEDNGKPPSSAPSRPRPPRRKRRESTSAEEDIIDGFAMTSFVTFEALEKDVAVKPQERAEKRQTPLTKKKREALTNGLSFHSKKSRLSHSHHYSSDRENDRNLCQHLGKRKKMPKGLRQLKPGQNSCRDSDSESASGESKGFQRSSSRERLSDSSAPSSLGTGYFCDSDSDQEEKASDASSEKLFNTVLVNKDPELGVGALPEHNQDAGPIVPKISGLERSQEKSQDCCKEPVFEPVVLKDPHPQLPQLPSQAQAEPQLQIPSPGPDLVPRTEAPPQFPPPSTQPAQGPPEAQLQPAPLPQVQQRPPRPQSPSHLLQQTLPPVQSHPSSQSLSQPLSAYNSSSLSLNSLSSRSSTPAKTQPAPPHISHHPSASPFPLSLPNHSPLHSFTPTLQPPAHSHHPNMFAPPTALPPPPPLTSGSLQVPGHPAGSTYSEQDILRQELNTRFLASQSADRGASLGPPPYLRTEFHQHQHQHQHTHQHTHQHTFTPFPHAIPPTAIMPTPAPPMFDKYPTKVDPFYRHSLFHSYPPAVSGIPPMIPPTGPFGSLQGAFQPKTSNPIDVAARPGTVPHTLLQKDPRLTDPFRPMLRKPGKWCAMHVHIAWQIYHHQQKVKKQMQSDPHKLDFGLKPEFLSRPPGPSLFGAIHHPHDLARPSTLFSAAGAAHPTGTPFGPPPHHSNFLNPAAHLEPFNRPSTFTGLAAVGGNAFGGLGNPSVTPNSVFGHKDSPSVQNFSNPHEPWNRLHRTPPSFPTPPPWLKPGELERSASAAAHDRDRDVDKRDSSVSKDDKERESVEKRHPSHPSPAPPVPVSALGHNRSSTDPTTRGHLNTEAREKDKPKEKERDHSGSRKDLTTEEHKAKESHLPERDGHSHEGRAAGEEPKQLSRVPSPYVRTPGVDSTRPNSTSSREAEPRKGEPAYENPKKNAEVKVKEERKEDHDLPTEAPQAHRTSEAPPPSSSASASVHPGPLASMPMTVGVTGIHAMNSIGSLDRTRMVTPFMGLSPIPGGERFPYPSFHWDPMRDPLRDPYRDLDMHRRDPLGRDFLLRNDPLHRLSTPRLYEADRSFRDREPHDYSHHHHHHHHPLAVDPRREHERGGHLDERERLHVLREDYEHPRLHPVHPASLDGHLPHPSLLTPGLPSMHYPRISPTAGHQNGLLNKTPPTAALSAPPPLISTLGGRPGSPRRTTPLSAEIRERPPSHTLKDIEAR.

Disordered stretches follow at residues 1 to 88 (MDGP…EDII), 105 to 236 (DVAV…DASS), 251 to 486 (LGVG…AGST), 505 to 545 (QSAD…FTPF), 771 to 1023 (NSVF…PLAS), and 1121 to 1148 (REPH…HERG). Basic residues predominate over residues 8 to 17 (HGLRKKRRSR). The span at 30-40 (LGTGAAGGIGA) shows a compositional bias: gly residues. The span at 105-118 (DVAVKPQERAEKRQ) shows a compositional bias: basic and acidic residues. The span at 136-147 (HSKKSRLSHSHH) shows a compositional bias: basic residues. Residues 148 to 158 (YSSDRENDRNL) show a composition bias toward basic and acidic residues. Residues 177–192 (PGQNSCRDSDSESASG) show a composition bias toward polar residues. Residues 275–298 (RSQEKSQDCCKEPVFEPVVLKDPH) are compositionally biased toward basic and acidic residues. Positions 288-471 (VFEPVVLKDP…PTALPPPPPL (184 aa)) are important for regulation of lamellipodia formation. Composition is skewed to low complexity over residues 301 to 315 (LPQL…PQLQ) and 339 to 409 (QPAQ…SRSS). Residues 435 to 446 (PNHSPLHSFTPT) show a composition bias toward polar residues. The segment covering 526-539 (HQHQHQHTHQHTHQ) has biased composition (basic residues). Positions 800–809 (PSFPTPPPWL) are enriched in pro residues. A compositionally biased stretch (basic and acidic residues) spans 812–849 (GELERSASAAAHDRDRDVDKRDSSVSKDDKERESVEKR). Positions 868–879 (NRSSTDPTTRGH) are enriched in polar residues. Basic and acidic residues-rich tracts occupy residues 880–935 (LNTE…EPKQ) and 960–993 (REAE…HDLP). Positions 1127 to 1136 (SHHHHHHHHP) are enriched in basic residues. 2 positions are modified to phosphoserine: Ser1200 and Ser1235. The interval 1201-1261 (PTAGHQNGLL…SHTLKDIEAR (61 aa)) is disordered. Basic and acidic residues predominate over residues 1245–1261 (EIRERPPSHTLKDIEAR).

The protein belongs to the AUTS2 family. In terms of assembly, component of a PRC1-like complex that contains PCGF5, RNF2, CSNK2B, RYBP and AUTS2. Within this complex, interacts directly with PCGF5 and CSNK2B. Interacts with the histone acetyltransferase EP300/p300. Interacts (via Pro-rich region) with PREX1, DOCK1 and ELMO2. In terms of tissue distribution, detected in brain cortex in embryo, neonates and adults (at protein level). Detected in embryonic and adult Purkinje cells in the cerebellum. Detected in dorsal thalamus and in dopaminergic neurons in substantia nigra.

It is found in the nucleus. It localises to the cytoplasm. The protein resides in the cytoskeleton. Its subcellular location is the cell projection. The protein localises to the growth cone. Its function is as follows. Component of a Polycomb group (PcG) multiprotein PRC1-like complex, a complex class required to maintain the transcriptionally repressive state of many genes, including Hox genes, throughout development. PcG PRC1 complex acts via chromatin remodeling and modification of histones; it mediates monoubiquitination of histone H2A 'Lys-119', rendering chromatin heritably changed in its expressibility. The PRC1-like complex that contains PCGF5, RNF2, CSNK2B, RYBP and AUTS2 has decreased histone H2A ubiquitination activity, due to the phosphorylation of RNF2 by CSNK2B. As a consequence, the complex mediates transcriptional activation. In the cytoplasm, plays a role in axon and dendrite elongation and in neuronal migration during embryonic brain development. Promotes reorganization of the actin cytoskeleton, lamellipodia formation and neurite elongation via its interaction with RAC guanine nucleotide exchange factors, which then leads to the activation of RAC1. The chain is Autism susceptibility gene 2 protein homolog (Auts2) from Mus musculus (Mouse).